The chain runs to 609 residues: Sterol O-acyltransferase 2 (609 aa).

Polar residues predominate over residues 1–15 (MGRTNTSDQLNAISD). Positions 1–41 (MGRTNTSDQLNAISDKNTKRKSLALDNEYHNNSSSEDDSSK) are disordered. The next 6 membrane-spanning stretches (helical) occupy residues 152–172 (FFGM…NNLI), 195–215 (LFKV…AFFV), 229–249 (VGWW…LWIA), 253–273 (CLDF…VFIM), 402–422 (WSYV…MILI), and 451–471 (FLLM…FFLI). An FYXDWWN motif motif is present at residues 490–496 (FYGPWWS). 2 helical membrane passes run 534-554 (AAII…YVIF) and 589-609 (IICW…YLVF). The active site involves histidine 546.

Belongs to the membrane-bound acyltransferase family. Sterol o-acyltransferase subfamily.

It is found in the endoplasmic reticulum membrane. Its activity is regulated as follows. Inhibited by the protoberberine derivative HWY-289 in a non-competitive manner. Inhibited by miconazole. Not inhibited by CI-976, polyoxin D, amphotericin B or nikkomycin Z. Functionally, sterol O-acyltransferase that catalyzes the formation of stery esters. This chain is Sterol O-acyltransferase 2, found in Candida albicans (Yeast).